A 728-amino-acid chain; its full sequence is Catalase-peroxidase 1 (728 aa).

The tryptophyl-tyrosyl-methioninium (Trp-Tyr) (with M-244) cross-link spans 91–218 (WHGAGTYRIA…LAAVQMGLIY (128 aa)). Residue histidine 92 is the Proton acceptor of the active site. Positions 218-244 (YVNPEGPDGKPDPVAAARDIRDTFARM) form a cross-link, tryptophyl-tyrosyl-methioninium (Tyr-Met) (with W-91). Histidine 259 contacts heme b.

The protein belongs to the peroxidase family. Peroxidase/catalase subfamily. In terms of assembly, homodimer or homotetramer. Heme b serves as cofactor. Post-translationally, formation of the three residue Trp-Tyr-Met cross-link is important for the catalase, but not the peroxidase activity of the enzyme.

The enzyme catalyses H2O2 + AH2 = A + 2 H2O. It carries out the reaction 2 H2O2 = O2 + 2 H2O. Its function is as follows. Bifunctional enzyme with both catalase and broad-spectrum peroxidase activity. The protein is Catalase-peroxidase 1 of Burkholderia vietnamiensis (strain G4 / LMG 22486) (Burkholderia cepacia (strain R1808)).